A 716-amino-acid chain; its full sequence is Ciliary WD repeat-containing protein ctxp80 (716 aa).

The tract at residues 1–53 (MGCGGSSGASDPSSEKINWNNAEIHDEFKQEQKKAGAKRKAFDKTTGKAVEKE) is disordered. Residues 8–21 (GASDPSSEKINWNN) show a composition bias toward polar residues. The segment covering 23 to 53 (EIHDEFKQEQKKAGAKRKAFDKTTGKAVEKE) has biased composition (basic and acidic residues). WD repeat units lie at residues 167-208 (YHTN…KKGR), 213-254 (KGGR…QVKK), 257-297 (SGPD…FKKK), 305-343 (GKPT…STYD), 345-382 (HGKG…AEKT), 424-462 (HSDG…STAL), 529-568 (DSGE…KLGT), 571-610 (AHNS…QDPS), 639-678 (TDGT…GATP), and 683-715 (GHSE…QWKK).

The protein belongs to the WD repeat EMAP family.

This Euplotoides octocarinatus (Freshwater ciliate) protein is Ciliary WD repeat-containing protein ctxp80.